A 366-amino-acid polypeptide reads, in one-letter code: Phospho-N-acetylmuramoyl-pentapeptide-transferase (366 aa).

10 helical membrane passes run 27–47 (AALFTSALIVFLFGPTIINSL), 71–91 (TPTMGGLMILAGIVGASLLWA), 93–113 (LSNVYVVATLLVTLGFGAIGF), 134–154 (LGIEFIIAGIAVYFMMRTALA), 174–194 (FLINLGIMFVVFGGFVIVGAG), 205–225 (GLAIVPVMIAAASFGVIAYLA), 245–265 (LAVVLGAVIGAGLGFLWFNAP), 268–288 (AIFMGDTGSLALGGTIGTVAV), 294–314 (IVMAIIGGLFVMETLSVIIQV), and 343–363 (QVVIRFWIIAVGLALLGLSTL).

It belongs to the glycosyltransferase 4 family. MraY subfamily. Mg(2+) serves as cofactor.

It is found in the cell inner membrane. The enzyme catalyses UDP-N-acetyl-alpha-D-muramoyl-L-alanyl-gamma-D-glutamyl-meso-2,6-diaminopimeloyl-D-alanyl-D-alanine + di-trans,octa-cis-undecaprenyl phosphate = di-trans,octa-cis-undecaprenyl diphospho-N-acetyl-alpha-D-muramoyl-L-alanyl-D-glutamyl-meso-2,6-diaminopimeloyl-D-alanyl-D-alanine + UMP. Its pathway is cell wall biogenesis; peptidoglycan biosynthesis. Its function is as follows. Catalyzes the initial step of the lipid cycle reactions in the biosynthesis of the cell wall peptidoglycan: transfers peptidoglycan precursor phospho-MurNAc-pentapeptide from UDP-MurNAc-pentapeptide onto the lipid carrier undecaprenyl phosphate, yielding undecaprenyl-pyrophosphoryl-MurNAc-pentapeptide, known as lipid I. The protein is Phospho-N-acetylmuramoyl-pentapeptide-transferase of Rhizobium etli (strain CIAT 652).